The primary structure comprises 229 residues: Glutamine amidotransferase-like class 1 domain-containing protein 1 (229 aa).

A signal peptide spans 1 to 34; the sequence is MKKQGAPVSGGGTERLTKPSCLMVGSAVAEGVSA. N-linked (GlcNAc...) asparagine glycans are attached at residues asparagine 154 and asparagine 212.

Belongs to the peptidase C56 family. Homotetramer. Component of the FERRY complex.

It localises to the secreted. The protein resides in the early endosome. In terms of biological role, component of the FERRY complex (Five-subunit Endosomal Rab5 and RNA/ribosome intermediary). The FERRY complex directly interacts with mRNAs and RAB5A, and functions as a RAB5A effector involved in the localization and the distribution of specific mRNAs most likely by mediating their endosomal transport. The complex recruits mRNAs and ribosomes to early endosomes through direct mRNA-interaction. In Xenopus laevis (African clawed frog), this protein is Glutamine amidotransferase-like class 1 domain-containing protein 1.